Reading from the N-terminus, the 330-residue chain is tRNA U34 carboxymethyltransferase (330 aa).

Carboxy-S-adenosyl-L-methionine-binding positions include K91, W105, K110, G130, D152 to S154, I181 to E182, M196, Y200, and R315.

This sequence belongs to the class I-like SAM-binding methyltransferase superfamily. CmoB family. As to quaternary structure, homotetramer.

It carries out the reaction carboxy-S-adenosyl-L-methionine + 5-hydroxyuridine(34) in tRNA = 5-carboxymethoxyuridine(34) in tRNA + S-adenosyl-L-homocysteine + H(+). Its function is as follows. Catalyzes carboxymethyl transfer from carboxy-S-adenosyl-L-methionine (Cx-SAM) to 5-hydroxyuridine (ho5U) to form 5-carboxymethoxyuridine (cmo5U) at position 34 in tRNAs. The chain is tRNA U34 carboxymethyltransferase from Shewanella woodyi (strain ATCC 51908 / MS32).